The primary structure comprises 683 residues: DNA polymerase alpha-associated DNA helicase A (683 aa).

229 to 236 (GPPGTGKT) is an ATP binding site.

This sequence belongs to the DNA2/NAM7 helicase family. Associates with the hexameric DNA polymerase alpha.

It localises to the cytoplasm. Its subcellular location is the nucleus. It carries out the reaction ATP + H2O = ADP + phosphate + H(+). Functionally, DNA polymerase alpha-associated DNA helicase which may be involved in DNA replication. This is DNA polymerase alpha-associated DNA helicase A (HCS1) from Saccharomyces cerevisiae (strain ATCC 204508 / S288c) (Baker's yeast).